The following is a 134-amino-acid chain: S-protein homolog 31 (134 aa).

Residues 1 to 21 (MKILSVFLFVFSIYIFGHVSG) form the signal peptide. A glycan (N-linked (GlcNAc...) asparagine) is linked at Asn87.

Belongs to the plant self-incompatibility (S1) protein family.

The protein localises to the secreted. This is S-protein homolog 31 from Arabidopsis thaliana (Mouse-ear cress).